Reading from the N-terminus, the 258-residue chain is MTSRMPLMAGNWKMNLNHLEAIAHVQKLAFALADKDYEACEVAVLPPYTDLRSVQTLVDGDKLKIKYGAQDVSAHDSGAYTGEISGSMLAKLKCTYVAVGHSERRQYHHETDEIVNAKVKASFRHGLIPILCVGEELEVREAGNHVTHTLTQVEGGLKDVPAEQAETIVIAYEPVWAIGTGKVCGADDAQEVCAAIRAKLAELYSQELADQVRIQYGGSVKSGNVAEIMAKPDIDGALVGGASLDADEFVKIARFRDQ.

Asn11–Lys13 is a binding site for substrate. The active-site Electrophile is the His101. Catalysis depends on Glu173, which acts as the Proton acceptor. Residues Gly179, Ser219, and Gly240 to Gly241 each bind substrate.

Belongs to the triosephosphate isomerase family. Homodimer.

The protein localises to the cytoplasm. The catalysed reaction is D-glyceraldehyde 3-phosphate = dihydroxyacetone phosphate. The protein operates within carbohydrate biosynthesis; gluconeogenesis. It functions in the pathway carbohydrate degradation; glycolysis; D-glyceraldehyde 3-phosphate from glycerone phosphate: step 1/1. Involved in the gluconeogenesis. Catalyzes stereospecifically the conversion of dihydroxyacetone phosphate (DHAP) to D-glyceraldehyde-3-phosphate (G3P). This chain is Triosephosphate isomerase, found in Streptomyces avermitilis (strain ATCC 31267 / DSM 46492 / JCM 5070 / NBRC 14893 / NCIMB 12804 / NRRL 8165 / MA-4680).